A 1334-amino-acid chain; its full sequence is Rho1 guanine nucleotide exchange factor 1 (1334 aa).

Disordered stretches follow at residues 1–89 (MDYR…ASPV), 135–182 (PQVS…SDSV), 203–245 (LDQN…TSGT), and 381–402 (SLIN…ASSP). Residues 138 to 149 (SNHAPNNSNSPS) are compositionally biased toward low complexity. Polar residues predominate over residues 150–164 (LTWHTSSGDDSNQNP). The span at 170-180 (QSQSSTSPVSD) shows a compositional bias: low complexity. Polar residues-rich tracts occupy residues 213 to 227 (VRSS…NSRL), 234 to 245 (HTVGSHSFTSGT), and 381 to 400 (SLIN…SEAS). Ser381 is modified (phosphoserine). The DH domain occupies 621–808 (KRQEVICEVI…RGFLSRLNVE (188 aa)). Residues 843–973 (QLIFKGPLKK…WLEHIDNQQT (131 aa)) enclose the PH domain. The CNH domain maps to 995–1293 (DNKVNAIGVY…RLLADGRGKL (299 aa)).

It is found in the cytoplasm. In terms of biological role, stimulates the exchange of Rho1 and Rho5 GDP-bound form into GTP-bound form. Controls septum formation, cell wall synthesis and localization of F-actin patches. Coordinates actin deposition with cell wall biosynthesis during bipolar growth. The sequence is that of Rho1 guanine nucleotide exchange factor 1 (rgf1) from Schizosaccharomyces pombe (strain 972 / ATCC 24843) (Fission yeast).